The chain runs to 174 residues: Endoribonuclease YbeY (174 aa).

Positions 129, 133, and 139 each coordinate Zn(2+).

This sequence belongs to the endoribonuclease YbeY family. It depends on Zn(2+) as a cofactor.

It is found in the cytoplasm. Single strand-specific metallo-endoribonuclease involved in late-stage 70S ribosome quality control and in maturation of the 3' terminus of the 16S rRNA. The chain is Endoribonuclease YbeY from Lactobacillus delbrueckii subsp. bulgaricus (strain ATCC BAA-365 / Lb-18).